A 942-amino-acid polypeptide reads, in one-letter code: MDTKEEKKERKQSYFARLKKKKQAKQNAETASAVATRTHTGKEDNNTVVLEPDKCNIAVEEEYMTDEKKKRKSNQLKEIRRTELKRYYSIDDNQNKTHDKKEKKMVVQKPHGTMEYTAGNQDTLNSIALKFNITPNKLVELNKLFTHTIVPGQVLFVPDANSPSSTLRLSSSSPGATVSPSSSDAEYDKLPDADLARKALKPIERVLSSTSEEDEPGVVKFLKMNCRYFTDGKGVVGGVMIVTPNNIMFDPHKSDPLVIENGCEEYGLICPMEEVVSIALYNDISHMKIKDALPSDLPQDLCPLYRPGEWEDLASEKDINPFSKFKSINKEKRQQNGEKIMTSDSRPIVPLEKSTGHTPTKPSGSSVSEKLKKLDSSRETSHGSPTVTKLSKEPSDTSSAFESTAKENFLGEDDDFVDLEELSSQTGGGMHKKDTLKECLSLDPEERKKAESQINNSAVEMQVQSALAFLGTENDVELKGALDLETCEKQDIMPEVDKQSGSPESRVENTLNIHEDLDKVKLIEYYLTKNKEGPQVSENLQKTELSDGKSIEPGGIDITLSSSLSQAGDPITEGNKEPDKTWVKKGEPLPVKLNSSTEANVIKEALDSSLESTLDNSCQGAQMDNKSEVQLWLLKRIQVPIEDILPSKEEKSKTPPMFLCIKVGKPMRKSFATHTAAMVQQYGKRRKQPEYWFAVPRERVDHLYTFFVQWSPDVYGKDAKEQGFVVVEKEELNMIDNFFSEPTTKSWEIITVEEAKRRKSTCSYYEDEDEEVLPVLRPHSALLENMHIEQLARRLPARVQGYPWRLAYSTLEHGTSLKTLYRKSASLDSPVLLVIKDMDNQIFGAYATHPFKFSDHYYGTGETFLYTFSPHFKVFKWSGENSYFINGDISSLELGGGGGRFGLWLDADLYHGRSNSCSTFNNDILSKKEDFIVQDLEVWAFD.

Methionine 1 bears the N-acetylmethionine mark. Residues 1 to 12 show a composition bias toward basic and acidic residues; that stretch reads MDTKEEKKERKQ. The tract at residues 1-46 is disordered; that stretch reads MDTKEEKKERKQSYFARLKKKKQAKQNAETASAVATRTHTGKEDNN. A coiled-coil region spans residues 4 to 29; that stretch reads KEEKKERKQSYFARLKKKKQAKQNAE. A compositionally biased stretch (polar residues) spans 25-38; it reads KQNAETASAVATRT. Phosphoserine is present on serine 89. Residues 114-157 enclose the LysM domain; sequence MEYTAGNQDTLNSIALKFNITPNKLVELNKLFTHTIVPGQVLFV. Threonine 134 carries the phosphothreonine modification. The segment at 161 to 188 is disordered; the sequence is NSPSSTLRLSSSSPGATVSPSSSDAEYD. Residues 162-183 show a composition bias toward low complexity; it reads SPSSTLRLSSSSPGATVSPSSS. Residues serine 179, serine 183, serine 208, serine 209, and serine 211 each carry the phosphoserine modification. The segment at 324-416 is disordered; the sequence is KFKSINKEKR…ENFLGEDDDF (93 aa). A compositionally biased stretch (polar residues) spans 356–368; it reads GHTPTKPSGSSVS. Over residues 369–381 the composition is skewed to basic and acidic residues; sequence EKLKKLDSSRETS. Residues serine 441, serine 500, and serine 502 each carry the phosphoserine modification. One can recognise a TLDc domain in the interval 781–942; that stretch reads ALLENMHIEQ…VQDLEVWAFD (162 aa).

Belongs to the OXR1 family. As to quaternary structure, interacts with ESR1, ESR2A, ESR2B, THRB, PPARG and RARA in a ligand-inducible manner. Interacts with the heterodimer AHR-ARNT. Highly expressed in brain. Weakly expressed in mammary gland, ovary, uterus, prostate, stomach, bladder, spinal cord and pancreas. Expressed in cancer cell line.

Its subcellular location is the nucleus. In terms of biological role, enhances the transcriptional activities of several nuclear receptors. Involved in the coactivation of different nuclear receptors, such as ESR1, THRB, PPARG and RARA. This chain is Nuclear receptor coactivator 7 (NCOA7), found in Homo sapiens (Human).